We begin with the raw amino-acid sequence, 112 residues long: MTIAKTILLFVLAAAAEIGGAWLVWQAVREGKEWWWAGLGVLALGVYGFAATLQPDAHFGRILAAYGGVFVAGSLAWGMVFDGFRPDRWDIIGSVICLLGVAVIMFAPRNAG.

4 consecutive transmembrane segments (helical) span residues 7 to 27 (ILLF…VWQA), 33 to 53 (EWWW…AATL), 62 to 82 (ILAA…MVFD), and 88 to 108 (RWDI…MFAP).

The protein belongs to the UPF0060 family.

It is found in the cell membrane. This chain is UPF0060 membrane protein Arth_4238, found in Arthrobacter sp. (strain FB24).